Consider the following 571-residue polypeptide: Decapping 5-like protein (571 aa).

Residues 1–17 show a composition bias toward low complexity; that stretch reads MASESSQSSSPSSSQPP. Disordered regions lie at residues 1–27, 102–141, 159–187, and 258–305; these read MASE…SPGN, LQVN…ISGY, LSSK…GSLT, and SQVV…SEAQ. One can recognise a Sm domain in the interval 25-108; that stretch reads PGNNVGDTFI…IKDLQVNPSP (84 aa). Composition is skewed to polar residues over residues 104-138 and 167-187; these read VNPS…SSPI and TQHS…GSLT. Residues 264-279 show a composition bias toward low complexity; sequence SPDVSSNQSYSSNPSP. The span at 293 to 305 shows a compositional bias: polar residues; sequence SVSSNLSPPSEAQ. The region spanning 419 to 455 is the DFDF domain; the sequence is RIPSSSIEYTEEFDFEAMNEKFKKSELWGYLGRNNQR. Residues 474–489 carry the FFD box motif; the sequence is PAYNKDDFFDTISCNQ. A TFG box motif is present at residues 498 to 518; it reads QQHNQFPEHMRQVPEAFGNNF.

Belongs to the LSM14 family. Homodimer. Component of the decapping complex.

The protein resides in the cytoplasm. It is found in the P-body. As a component of the decapping complex, involved in the degradation of mRNAs. Promotes P-body formation. Translational repressor. The polypeptide is Decapping 5-like protein (DCP5-L) (Arabidopsis thaliana (Mouse-ear cress)).